A 268-amino-acid chain; its full sequence is MRNDVHMGHKARKRFGQNFLNDPYIIDGIVSAINPRPGQNLVEIGPGLGAITEPVGREVDKFTVIELDRDLAERLRTHPELADKLTIHEGDAMRFDFTQLVKPNNKLRIFGNLPYNISTPLMFHLFEFHKDIQDMHFMLQKEVVNRLAAGPGSKAYGRLTVMAQYYCKVVPVLEVPPTAFVPPPKVDSAVVRLVPYETLPHPANNLQWLERVCREGFNQRRKTVRNCYKSLMSEQVLEELGVNPGMRPENLTLQQFVAMANWLDANHK.

S-adenosyl-L-methionine-binding residues include Asn-18, Leu-20, Gly-45, Glu-66, Asp-91, and Asn-112.

It belongs to the class I-like SAM-binding methyltransferase superfamily. rRNA adenine N(6)-methyltransferase family. RsmA subfamily.

The protein resides in the cytoplasm. The enzyme catalyses adenosine(1518)/adenosine(1519) in 16S rRNA + 4 S-adenosyl-L-methionine = N(6)-dimethyladenosine(1518)/N(6)-dimethyladenosine(1519) in 16S rRNA + 4 S-adenosyl-L-homocysteine + 4 H(+). Functionally, specifically dimethylates two adjacent adenosines (A1518 and A1519) in the loop of a conserved hairpin near the 3'-end of 16S rRNA in the 30S particle. May play a critical role in biogenesis of 30S subunits. The chain is Ribosomal RNA small subunit methyltransferase A from Vibrio vulnificus (strain CMCP6).